Consider the following 119-residue polypeptide: Holo-[acyl-carrier-protein] synthase (119 aa).

D8 and E58 together coordinate Mg(2+).

This sequence belongs to the P-Pant transferase superfamily. AcpS family. Mg(2+) serves as cofactor.

The protein resides in the cytoplasm. It catalyses the reaction apo-[ACP] + CoA = holo-[ACP] + adenosine 3',5'-bisphosphate + H(+). Functionally, transfers the 4'-phosphopantetheine moiety from coenzyme A to a Ser of acyl-carrier-protein. This Lactobacillus johnsonii (strain CNCM I-12250 / La1 / NCC 533) protein is Holo-[acyl-carrier-protein] synthase.